A 249-amino-acid polypeptide reads, in one-letter code: NADH-quinone oxidoreductase subunit C (249 aa).

Belongs to the complex I 30 kDa subunit family. NDH-1 is composed of 14 different subunits. Subunits NuoB, C, D, E, F, and G constitute the peripheral sector of the complex.

It localises to the cell inner membrane. The enzyme catalyses a quinone + NADH + 5 H(+)(in) = a quinol + NAD(+) + 4 H(+)(out). Its function is as follows. NDH-1 shuttles electrons from NADH, via FMN and iron-sulfur (Fe-S) centers, to quinones in the respiratory chain. The immediate electron acceptor for the enzyme in this species is believed to be ubiquinone. Couples the redox reaction to proton translocation (for every two electrons transferred, four hydrogen ions are translocated across the cytoplasmic membrane), and thus conserves the redox energy in a proton gradient. The protein is NADH-quinone oxidoreductase subunit C of Xylella fastidiosa (strain M12).